We begin with the raw amino-acid sequence, 492 residues long: Ribose import ATP-binding protein RbsA (492 aa).

ABC transporter domains are found at residues 3-239 (IEMK…VGRS) and 249-492 (AEIR…TGGQ). Position 35–42 (35–42 (GENGAGKS)) interacts with ATP.

Belongs to the ABC transporter superfamily. Ribose importer (TC 3.A.1.2.1) family. In terms of assembly, the complex is composed of an ATP-binding protein (RbsA), two transmembrane proteins (RbsC) and a solute-binding protein (RbsB).

It localises to the cell membrane. The enzyme catalyses D-ribose(out) + ATP + H2O = D-ribose(in) + ADP + phosphate + H(+). Part of the ABC transporter complex RbsABC involved in ribose import. Responsible for energy coupling to the transport system. In Lactococcus lactis subsp. lactis (strain IL1403) (Streptococcus lactis), this protein is Ribose import ATP-binding protein RbsA.